The primary structure comprises 117 residues: Holo-[acyl-carrier-protein] synthase (117 aa).

Residues Asp-8 and Glu-58 each contribute to the Mg(2+) site.

The protein belongs to the P-Pant transferase superfamily. AcpS family. Mg(2+) serves as cofactor.

The protein resides in the cytoplasm. The catalysed reaction is apo-[ACP] + CoA = holo-[ACP] + adenosine 3',5'-bisphosphate + H(+). Functionally, transfers the 4'-phosphopantetheine moiety from coenzyme A to a Ser of acyl-carrier-protein. The protein is Holo-[acyl-carrier-protein] synthase of Staphylococcus epidermidis (strain ATCC 35984 / DSM 28319 / BCRC 17069 / CCUG 31568 / BM 3577 / RP62A).